A 702-amino-acid polypeptide reads, in one-letter code: Serotransferrin-A (702 aa).

The signal sequence occupies residues methionine 1–alanine 19. Transferrin-like domains are found at residues valine 26 to glutamate 340 and valine 353 to lysine 685. Cystine bridges form between cysteine 29–cysteine 64 and cysteine 39–cysteine 55. Residues aspartate 79 and tyrosine 111 each coordinate Fe(3+). Cystine bridges form between cysteine 134/cysteine 217, cysteine 179/cysteine 192, and cysteine 245/cysteine 259. Residues threonine 136, lysine 140, alanine 142, and glycine 143 each contribute to the hydrogencarbonate site. Tyrosine 211 is a Fe(3+) binding site. Histidine 267 serves as a coordination point for Fe(3+). The segment at glutamate 340–alanine 349 is connecting region. Intrachain disulfides connect cysteine 356–cysteine 388 and cysteine 366–cysteine 379. Aspartate 403 and tyrosine 442 together coordinate Fe(3+). Intrachain disulfides connect cysteine 413-cysteine 697, cysteine 431-cysteine 658, cysteine 465-cysteine 544, cysteine 489-cysteine 686, cysteine 499-cysteine 513, cysteine 510-cysteine 527, and cysteine 584-cysteine 598. 4 residues coordinate hydrogencarbonate: threonine 467, arginine 471, alanine 473, and glycine 474. Residue tyrosine 538 coordinates Fe(3+). Histidine 606 is a binding site for Fe(3+).

Belongs to the transferrin family. Monomer. In terms of tissue distribution, plasma.

It localises to the secreted. Its function is as follows. Transferrins are iron binding transport proteins which can bind two Fe(3+) ions in association with the binding of an anion, usually bicarbonate. It is responsible for the transport of iron from sites of absorption and heme degradation to those of storage and utilization. Serum transferrin may also have a further role in stimulating cell proliferation. In Xenopus laevis (African clawed frog), this protein is Serotransferrin-A (tf-a).